A 365-amino-acid polypeptide reads, in one-letter code: Chaperone protein DnaJ (365 aa).

The J domain maps to 4 to 70 (DYYKILGVDR…QKRRMYDQTG (67 aa)). The CR-type zinc-finger motif lies at 139–220 (GTEKRIKYRR…CNGTGTVVVN (82 aa)). Zn(2+) contacts are provided by C152, C155, C168, C171, C194, C197, C208, and C211. 4 CXXCXGXG motif repeats span residues 152 to 159 (CPDCNGTG), 168 to 175 (CPTCNGTG), 194 to 201 (CQTCGGRG), and 208 to 215 (CPRCNGTG).

The protein belongs to the DnaJ family. As to quaternary structure, homodimer. Zn(2+) is required as a cofactor.

The protein resides in the cytoplasm. In terms of biological role, participates actively in the response to hyperosmotic and heat shock by preventing the aggregation of stress-denatured proteins and by disaggregating proteins, also in an autonomous, DnaK-independent fashion. Unfolded proteins bind initially to DnaJ; upon interaction with the DnaJ-bound protein, DnaK hydrolyzes its bound ATP, resulting in the formation of a stable complex. GrpE releases ADP from DnaK; ATP binding to DnaK triggers the release of the substrate protein, thus completing the reaction cycle. Several rounds of ATP-dependent interactions between DnaJ, DnaK and GrpE are required for fully efficient folding. Also involved, together with DnaK and GrpE, in the DNA replication of plasmids through activation of initiation proteins. This chain is Chaperone protein DnaJ, found in Thermoplasma acidophilum (strain ATCC 25905 / DSM 1728 / JCM 9062 / NBRC 15155 / AMRC-C165).